Reading from the N-terminus, the 175-residue chain is E1B protein, small T-antigen (175 aa).

Residues 153-175 form a disordered region; that stretch reads LAEEDEDEEGTTLTTEAEQESSA.

It belongs to the adenoviridae E1B 19 kDa protein family.

The polypeptide is E1B protein, small T-antigen (Mus musculus (Mouse)).